Here is a 1131-residue protein sequence, read N- to C-terminus: Protein DWARF 53 (1131 aa).

Positions 8–181 (ARQCLSPAAV…KLAILRPAPP (174 aa)) constitute a Clp R domain. Repeat stretches follow at residues 12 to 85 (LSPA…LDRL) and 103 to 181 (VSNS…PAPP). The interval 511–574 (NRDPYKPFPR…ISSPSVTNKR (64 aa)) is disordered. The segment covering 558 to 569 (SSSTARPISSPS) has biased composition (low complexity). The EAR 1 motif lies at 578–582 (LVLNL). The interval 588–655 (KSDENLQERG…KRVEDSERSV (68 aa)) is disordered. Residues 597–609 (GMQSQHGTLSNVD) show a composition bias toward polar residues. Over residues 646–655 (KRVEDSERSV) the composition is skewed to basic and acidic residues. The EAR 2 motif lies at 799–803 (LDLNL). 2 disordered regions span residues 951–970 (ISDD…RLHR) and 976–1002 (FDLN…NSYG). An EAR 3 motif is present at residues 976–981 (FDLNLP). Residues 982-993 (VDEDEPLDADDD) show a composition bias toward acidic residues.

This sequence belongs to the ClpA/ClpB family. As to quaternary structure, interacts with D3. Interacts with D14. The interaction with D14 is enhanced in the presence of strigolactones. The interaction with D14 occurs in the presence of (2'R) stereoisomers of strigolactones, but not (2'S) stereoisomers. Interacts with the TOPLESS-related proteins TPR1, TPR2 and TPR3. Interacts with SPL14/IPA1. Post-translationally, polyubiquitinated. Strigolactone, but not karrikin, triggers rapid SCF(D3)-dependent degradation via the proteasome. In terms of tissue distribution, expressed in the shoot bases of seedlings, young leaves, axillary buds and young panicles. Expressed in young roots vasculature, culms, internodes and nodes, preferentially in the parenchyma cells surrounding the xylem.

It is found in the nucleus. Its function is as follows. Repressor of strigolactones (SL) signaling. Subjected to a negative feedback control of SL signaling. Suppresses the transcriptional activation activity of SPL14/IPA1 in SL signaling. Acts with SPL14/IPA1 to mediate the SL-regulated tiller development. Subject to a negative feedback regulation by SPL14/IPA1, which binds to D53 promoter to repress D53 gene expression. This Oryza sativa subsp. japonica (Rice) protein is Protein DWARF 53.